The following is a 166-amino-acid chain: Putative 4-hydroxy-4-methyl-2-oxoglutarate aldolase (166 aa).

Substrate contacts are provided by residues Gly-81 to Ile-84 and Arg-103. A divalent metal cation is bound at residue Asp-104.

The protein belongs to the class II aldolase/RraA-like family. Homotrimer. Requires a divalent metal cation as cofactor.

The catalysed reaction is 4-hydroxy-4-methyl-2-oxoglutarate = 2 pyruvate. It catalyses the reaction oxaloacetate + H(+) = pyruvate + CO2. In terms of biological role, catalyzes the aldol cleavage of 4-hydroxy-4-methyl-2-oxoglutarate (HMG) into 2 molecules of pyruvate. Also contains a secondary oxaloacetate (OAA) decarboxylase activity due to the common pyruvate enolate transition state formed following C-C bond cleavage in the retro-aldol and decarboxylation reactions. This is Putative 4-hydroxy-4-methyl-2-oxoglutarate aldolase from Corynebacterium glutamicum (strain ATCC 13032 / DSM 20300 / JCM 1318 / BCRC 11384 / CCUG 27702 / LMG 3730 / NBRC 12168 / NCIMB 10025 / NRRL B-2784 / 534).